Reading from the N-terminus, the 152-residue chain is D-aminoacyl-tRNA deacylase (152 aa).

Positions 138–139 (GP) match the Gly-cisPro motif, important for rejection of L-amino acids motif.

This sequence belongs to the DTD family. Homodimer.

It is found in the cytoplasm. It catalyses the reaction glycyl-tRNA(Ala) + H2O = tRNA(Ala) + glycine + H(+). The enzyme catalyses a D-aminoacyl-tRNA + H2O = a tRNA + a D-alpha-amino acid + H(+). Functionally, an aminoacyl-tRNA editing enzyme that deacylates mischarged D-aminoacyl-tRNAs. Also deacylates mischarged glycyl-tRNA(Ala), protecting cells against glycine mischarging by AlaRS. Acts via tRNA-based rather than protein-based catalysis; rejects L-amino acids rather than detecting D-amino acids in the active site. By recycling D-aminoacyl-tRNA to D-amino acids and free tRNA molecules, this enzyme counteracts the toxicity associated with the formation of D-aminoacyl-tRNA entities in vivo and helps enforce protein L-homochirality. This chain is D-aminoacyl-tRNA deacylase, found in Chloroherpeton thalassium (strain ATCC 35110 / GB-78).